The primary structure comprises 189 residues: Thymidine kinase (189 aa).

Residues 9–16 (GTMNSGKT) and 85–88 (DESQ) contribute to the ATP site. Glutamate 86 serves as the catalytic Proton acceptor. 4 residues coordinate Zn(2+): cysteine 143, cysteine 146, cysteine 180, and histidine 183.

Belongs to the thymidine kinase family. Homotetramer.

The protein localises to the cytoplasm. The enzyme catalyses thymidine + ATP = dTMP + ADP + H(+). In Streptococcus pyogenes serotype M6 (strain ATCC BAA-946 / MGAS10394), this protein is Thymidine kinase.